The primary structure comprises 696 residues: MDTVDGGDVPSEARHRWEDLVAQIEAARFAYYVRNSSPLSDGQYDALERELRALEEQHPQLRTPDSPTQTVGGTFSTEFTTVDHPERMLSLDNAFSTDELSAWAARVEREVGAGARYLCEPKIDGLAIDLVYEDGRLVRGVTRGDGRTGEDVTFNVRTVEDVPHRLTGADVPEFLEVRGEVFFHLDGFAAINAGLVEAGKPPFANPRNAAAGSLRQKDPRVTATRPLRMLVHGVGARRGMENDTQSGAYEKLAAWGLPTSPRVKVVDTLDEVAEYVRFYGEHRHDVEHEIDGVVVKVDQVPLQRRLGSTSRAPRWAIAYKYPPEEVTTSLLDIQVNVGRTGRVTPFAVLEPVKVAGSTVAMATLHNASEVVRKGVLIGDTVVVRKAGDVIPEVLGPVVESRTGAEREFVMPTVCPECGTPLAHQRADDVDIRCPNSRSCPAQLRERVFHLAGRGSFDVEALGDKAAAALLQAGVIADEGDLFTLTEDDLVGVPLFTTKAGTVSANGRRLLANLHDRKDQPLWRVLVGLSIRHVGPTAARALADRFGSMEAIEAATAEDIASAEGVGPTIAEAVVEWLAVDWHRDVVRKWREAGVRMADERDESTPRTLEGLTIVVTGSLSGFSRDEAKEAVLSRGGKASSAVSKKTSFVVVGEAAGSKADKAEQLGVPVLDEEGFVALLEGGPDAVARPAEEPGQG.

NAD(+)-binding positions include 41–45 (DGQYD), 90–91 (SL), and glutamate 120. The N6-AMP-lysine intermediate role is filled by lysine 122. Positions 143, 180, 296, and 320 each coordinate NAD(+). Zn(2+) contacts are provided by cysteine 414, cysteine 417, cysteine 433, and cysteine 439. In terms of domain architecture, BRCT spans 603-692 (STPRTLEGLT…PDAVARPAEE (90 aa)).

It belongs to the NAD-dependent DNA ligase family. LigA subfamily. The cofactor is Mg(2+). Requires Mn(2+) as cofactor.

It catalyses the reaction NAD(+) + (deoxyribonucleotide)n-3'-hydroxyl + 5'-phospho-(deoxyribonucleotide)m = (deoxyribonucleotide)n+m + AMP + beta-nicotinamide D-nucleotide.. Its function is as follows. DNA ligase that catalyzes the formation of phosphodiester linkages between 5'-phosphoryl and 3'-hydroxyl groups in double-stranded DNA using NAD as a coenzyme and as the energy source for the reaction. It is essential for DNA replication and repair of damaged DNA. The polypeptide is DNA ligase (Kineococcus radiotolerans (strain ATCC BAA-149 / DSM 14245 / SRS30216)).